A 452-amino-acid polypeptide reads, in one-letter code: Exodeoxyribonuclease 7 large subunit (452 aa).

It belongs to the XseA family. As to quaternary structure, heterooligomer composed of large and small subunits.

Its subcellular location is the cytoplasm. It catalyses the reaction Exonucleolytic cleavage in either 5'- to 3'- or 3'- to 5'-direction to yield nucleoside 5'-phosphates.. Its function is as follows. Bidirectionally degrades single-stranded DNA into large acid-insoluble oligonucleotides, which are then degraded further into small acid-soluble oligonucleotides. This Bacillus cereus (strain ATCC 10987 / NRS 248) protein is Exodeoxyribonuclease 7 large subunit.